The primary structure comprises 375 residues: Tyrosine--tRNA ligase (375 aa).

L-tyrosine is bound by residues Y37, Y168, Q172, D175, and Q190. Positions 251–255 match the 'KMSKS' region motif; that stretch reads KMSKS. Residue K254 participates in ATP binding.

This sequence belongs to the class-I aminoacyl-tRNA synthetase family. TyrS type 4 subfamily. As to quaternary structure, homodimer.

Its subcellular location is the cytoplasm. The catalysed reaction is tRNA(Tyr) + L-tyrosine + ATP = L-tyrosyl-tRNA(Tyr) + AMP + diphosphate + H(+). Catalyzes the attachment of tyrosine to tRNA(Tyr) in a two-step reaction: tyrosine is first activated by ATP to form Tyr-AMP and then transferred to the acceptor end of tRNA(Tyr). This is Tyrosine--tRNA ligase from Thermococcus kodakarensis (strain ATCC BAA-918 / JCM 12380 / KOD1) (Pyrococcus kodakaraensis (strain KOD1)).